We begin with the raw amino-acid sequence, 219 residues long: Ras-like protein 1 (219 aa).

15 to 22 is a GTP binding site; that stretch reads GDGGVGKS. The short motif at 37–45 is the Effector region element; sequence YDPTIEDSY. Residues 62–66 and 121–124 contribute to the GTP site; these read DTAGQ and NKCD. Cys-216 bears the Cysteine methyl ester mark. Cys-216 is lipidated: S-farnesyl cysteine. A propeptide spans 217-219 (removed in mature form); that stretch reads VIC.

This sequence belongs to the small GTPase superfamily. Ras family. In terms of assembly, scd1, scd2, cdc42, and ras1, in its GTP-bound state, act cooperatively to form a protein complex. In terms of processing, palmitoylated by the erf2-erf4 complex.

It localises to the cell membrane. The catalysed reaction is GTP + H2O = GDP + phosphate + H(+). With respect to regulation, alternates between an inactive form bound to GDP and an active form bound to GTP. Activated by a guanine nucleotide-exchange factor (GEF) and inactivated by a GTPase-activating protein (GAP). Functionally, participates in the process of sexual differentiation and the determination of cell shape. Essential for mating and for recognition of the mating pheromone, but not for vegetative growth. Does not regulate the intracellular cAMP level. Regulates two downstream pathways, namely the byr2/byr1/spk1 mitogen-activated protein kinase cascade and the cdc42 small G protein pathway. The former is relevant to mating and sporulation, whereas the latter is relevant to mating, cell growth and cell morphology. This is Ras-like protein 1 (ras1) from Schizosaccharomyces pombe (strain 972 / ATCC 24843) (Fission yeast).